Consider the following 620-residue polypeptide: Protein CNGC15b (620 aa).

6 consecutive transmembrane segments (helical) span residues 73 to 93 (IFLVACLISLFVDPLFFYLPI), 102 to 122 (IGIAVEVFLIIIRSIADVFYV), 161 to 181 (GFFLDFIAALPLPQVLIWIVI), 198 to 218 (FIIIIQYLPRLFLIFPLSSQI), 237 to 257 (LMLYMLASHVLGACWYLLSIE), and 356 to 376 (GEIMFAIVIATLGLVLFALLI). An a nucleoside 3',5'-cyclic phosphate-binding site is contributed by 462–559 (LFDAMDERML…SSTRTVKAIS (98 aa)).

Belongs to the cyclic nucleotide-gated cation channel (TC 1.A.1.5) family. Interacts (via N-terminus) with DMI1 (via c-terminus). The Nod factor has no effect on this interaction, implying that the complex is maintained after activation. Expressed in roots, stems, leaves, flowers and pods.

Its subcellular location is the nucleus membrane. Functionally, cyclic nucleotide-gated channel involved in the establishment of both rhizobial and mycorrhizal associations. Required for full activation of nuclear-localized Ca(2+) oscillations by Nod and Myc factors. Simultaneous activation of the K(+)-permeable channel DMI1 and the Ca(2+) channel CNGC15 can give rise to sustained Ca(2+) oscillations. May function during fertilization in both female and male gametophytic Ca(2+) signaling. In Medicago truncatula (Barrel medic), this protein is Protein CNGC15b.